The sequence spans 85 residues: MAHKKGQGSTQNNRDSAGRRLGVKRFGSQFVRAGNIIVRQRGTKVHPGDNVGLGKDHTIYALIDGVVKFQQKDKNRKKVSVIPAS.

Residues 1 to 23 (MAHKKGQGSTQNNRDSAGRRLGV) form a disordered region.

Belongs to the bacterial ribosomal protein bL27 family.

The sequence is that of Large ribosomal subunit protein bL27 from Helicobacter hepaticus (strain ATCC 51449 / 3B1).